We begin with the raw amino-acid sequence, 286 residues long: Probable glucose uptake protein GlcU (286 aa).

A run of 10 helical transmembrane segments spans residues 4 to 22, 27 to 49, 53 to 72, 85 to 107, 111 to 133, 154 to 176, 181 to 198, 211 to 228, 233 to 255, and 267 to 284; these read IFLA…LFNV, GPYS…VYIF, VLTP…WALG, VSRT…GVIV, WSTT…GVIL, IVIL…LFNV, ALLP…LLTF, IIPG…FISQ, VATS…ILIL, and IVVG…LGIA.

It belongs to the GRP transporter (TC 2.A.7.5) family.

The protein resides in the cell membrane. In terms of biological role, involved in the uptake of glucose. This Bacillus cereus (strain ATCC 14579 / DSM 31 / CCUG 7414 / JCM 2152 / NBRC 15305 / NCIMB 9373 / NCTC 2599 / NRRL B-3711) protein is Probable glucose uptake protein GlcU (glcU).